We begin with the raw amino-acid sequence, 702 residues long: Ribosomal RNA large subunit methyltransferase K/L (702 aa).

The THUMP domain occupies leucine 43–leucine 154.

Belongs to the methyltransferase superfamily. RlmKL family.

The protein localises to the cytoplasm. It catalyses the reaction guanosine(2445) in 23S rRNA + S-adenosyl-L-methionine = N(2)-methylguanosine(2445) in 23S rRNA + S-adenosyl-L-homocysteine + H(+). The enzyme catalyses guanosine(2069) in 23S rRNA + S-adenosyl-L-methionine = N(2)-methylguanosine(2069) in 23S rRNA + S-adenosyl-L-homocysteine + H(+). Functionally, specifically methylates the guanine in position 2445 (m2G2445) and the guanine in position 2069 (m7G2069) of 23S rRNA. This Escherichia coli O6:K15:H31 (strain 536 / UPEC) protein is Ribosomal RNA large subunit methyltransferase K/L.